Consider the following 175-residue polypeptide: Large ribosomal subunit protein uL30 (175 aa).

It belongs to the universal ribosomal protein uL30 family. In terms of assembly, part of the 50S ribosomal subunit.

The sequence is that of Large ribosomal subunit protein uL30 from Pyrobaculum neutrophilum (strain DSM 2338 / JCM 9278 / NBRC 100436 / V24Sta) (Thermoproteus neutrophilus).